We begin with the raw amino-acid sequence, 874 residues long: Alanine--tRNA ligase (874 aa).

The Zn(2+) site is built by H562, H566, C665, and H669.

This sequence belongs to the class-II aminoacyl-tRNA synthetase family. The cofactor is Zn(2+).

It is found in the cytoplasm. It carries out the reaction tRNA(Ala) + L-alanine + ATP = L-alanyl-tRNA(Ala) + AMP + diphosphate. Catalyzes the attachment of alanine to tRNA(Ala) in a two-step reaction: alanine is first activated by ATP to form Ala-AMP and then transferred to the acceptor end of tRNA(Ala). Also edits incorrectly charged Ser-tRNA(Ala) and Gly-tRNA(Ala) via its editing domain. The protein is Alanine--tRNA ligase of Pseudomonas putida (strain ATCC 700007 / DSM 6899 / JCM 31910 / BCRC 17059 / LMG 24140 / F1).